Reading from the N-terminus, the 438-residue chain is uncharacterized protein (438 aa).

The N-terminal stretch at 1–19 (MKKLLLAASIICLASAGLA) is a signal peptide.

This is an uncharacterized protein from Rickettsia conorii (strain ATCC VR-613 / Malish 7).